The sequence spans 162 residues: Transcription elongation factor GreA (162 aa).

Residues 45–74 (ENAEYEAAREKQAFIEGRIKELEDMTARAE) adopt a coiled-coil conformation.

The protein belongs to the GreA/GreB family.

Necessary for efficient RNA polymerase transcription elongation past template-encoded arresting sites. The arresting sites in DNA have the property of trapping a certain fraction of elongating RNA polymerases that pass through, resulting in locked ternary complexes. Cleavage of the nascent transcript by cleavage factors such as GreA or GreB allows the resumption of elongation from the new 3'terminus. GreA releases sequences of 2 to 3 nucleotides. This is Transcription elongation factor GreA from Rickettsia conorii (strain ATCC VR-613 / Malish 7).